The primary structure comprises 879 residues: MLRCWSVTVERSCEGMLLRRRILSLSASSFRNFTSGNNGDAIPFSTFTKPSSSIAPGDFLVREWKDWFKHRDVKQSHQLIDRIFDILRAPSNDGDDRAFYLHLSNLRLRLTEKFVLDVLSHTRYDILCCLKFFDWAARQPGFHHTRATFHAIFKILRGAKLVTLMIDFLDRSVGFESCRHSLRLCDALVVGYAVAGRTDIALQHFGNMRFRGLDLDSFGYHVLLNALVEEKCFDSFDVIFDQISVRGFVCAVTHSILVKKFCKQGKLDEAEDYLRALLPNDPAGCGSGLGILVDALCSKRKFQEATKLLDEIKLVGTVNMDRAYNIWIRALIKAGFLNNPADFLQKISPLEGCELEVFRYNSMVFQLLKENNLDGVYDILTEMMVRGVSPNKKTMNAALCFFCKAGFVDEALELYRSRSEIGFAPTAMSYNYLIHTLCANESVEQAYDVLKGAIDRGHFLGGKTFSTLTNALCWKGKPDMARELVIAAAERDLLPKRIAGCKIISALCDVGKVEDALMINELFNKSGVDTSFKMFTSLIYGSITLMRGDIAAKLIIRMQEKGYTPTRSLYRNVIQCVCEMESGEKNFFTTLLKFQLSLWEHKVQAYNLFIEGAGFAGKPKLARLVYDMMDRDGITPTVASNILMLQSYLKNEKIADALHFFHDLREQGKTKKRLYQVMIVGLCKANKLDDAMHFLEEMKGEGLQPSIECYEVNIQKLCNEEKYDEAVGLVNEFRKSGRRITAFIGNVLLHNAMKSKGVYEAWTRMRNIEDKIPEMKSLGELIGLFSGRIDMEVELKRLDEVIEKCYPLDMYTYNMLLRMIVMNQAEDAYEMVERIARRGYVPNERTDMILERANRILEERNSRSNLGRNGWNSRQRQLE.

The transit peptide at 1–44 (MLRCWSVTVERSCEGMLLRRRILSLSASSFRNFTSGNNGDAIPF) directs the protein to the mitochondrion. PPR repeat units lie at residues 181-215 (SLRL…GLDL), 216-246 (DSFG…ISVR), 250-280 (CAVT…LLPN), 285-319 (CGSG…GTVN), 320-355 (MDRA…GCEL), 356-390 (EVFR…GVSP), 391-425 (NKKT…GFAP), 426-460 (TAMS…GHFL), 461-495 (GGKT…DLLP), 496-530 (KRIA…GVDT), 531-565 (SFKM…GYTP), 566-597 (TRSL…FQLS), 602-636 (KVQA…GITP), 637-667 (TVAS…LREQ), 671-705 (KKRL…GLQP), and 706-740 (SIEC…GRRI).

It belongs to the PPR family. P subfamily.

It localises to the mitochondrion. The polypeptide is Pentatricopeptide repeat-containing protein At1g71210, mitochondrial (Arabidopsis thaliana (Mouse-ear cress)).